A 643-amino-acid chain; its full sequence is Transmembrane 9 superfamily member 4 (643 aa).

An N-terminal signal peptide occupies residues 1 to 23 (MAAAMIWWPRFLLLLCLTCKGST). Over 24–282 (FYVPGVAPIN…TMSDVQIHWF (259 aa)) the chain is Extracellular. The helical transmembrane segment at 283–303 (SIINSVVVVFFLSGILSMIII) threads the bilayer. Residues 304–347 (RTLRKDIANYNKEDDIEDTMEESGWKLVHGDVFRPPQYPMILSS) lie on the Cytoplasmic side of the membrane. The residue at position 313 (Tyr-313) is a Phosphotyrosine. Residues 348 to 368 (LLGSGIQLFCMILIVIFVAML) traverse the membrane as a helical segment. The Extracellular portion of the chain corresponds to 369-377 (GMLSPSSRG). A helical transmembrane segment spans residues 378–398 (ALMTTACFLFMFMGVFGGFSA). At 399 to 417 (GRLYRTLKGHRWKKGAFCT) the chain is on the cytoplasmic side. A helical transmembrane segment spans residues 418 to 438 (ATLYPGVVFGICFVLNCFIWG). Topologically, residues 439–450 (KHSSGAVPFPTM) are extracellular. Residues 451-471 (VALLCMWFGISLPLVYLGYYF) form a helical membrane-spanning segment. Residues 472-502 (GFRKQPYDNPVRTNQIPRQIPEQRWYMNRFV) are Cytoplasmic-facing. The helical transmembrane segment at 503–523 (GILMAGILPFGAMFIELFFIF) threads the bilayer. Over 524-536 (SAIWENQFYYLFG) the chain is Extracellular. The helical transmembrane segment at 537–557 (FLFLVFIILVVSCSQISIVMV) threads the bilayer. Over 558-571 (YFQLCAEDYRWWWR) the chain is Cytoplasmic. The chain crosses the membrane as a helical span at residues 572-592 (NFLVSGGSAFYVLVYAIFYFV). The Extracellular portion of the chain corresponds to 593–599 (NKLDIVE). Residues 600-620 (FIPSLLYFGYTTLMVLSFWLL) form a helical membrane-spanning segment. Residues 621–643 (TGTIGFYAAYMFVRKIYAAVKID) are Cytoplasmic-facing.

Belongs to the nonaspanin (TM9SF) (TC 9.A.2) family.

Its subcellular location is the membrane. It localises to the golgi apparatus. It is found in the early endosome. Functionally, associates with proteins harboring glycine-rich transmembrane domains and ensures their efficient localization to the cell surface. In Rattus norvegicus (Rat), this protein is Transmembrane 9 superfamily member 4 (Tm9sf4).